The chain runs to 156 residues: Ribonuclease H (156 aa).

Residues E3 to E144 form the RNase H type-1 domain. Mg(2+) is bound by residues D12, E50, D72, and D136.

This sequence belongs to the RNase H family. Monomer. Mg(2+) is required as a cofactor.

The protein resides in the cytoplasm. It carries out the reaction Endonucleolytic cleavage to 5'-phosphomonoester.. In terms of biological role, endonuclease that specifically degrades the RNA of RNA-DNA hybrids. The polypeptide is Ribonuclease H (Shewanella baltica (strain OS223)).